Here is a 488-residue protein sequence, read N- to C-terminus: Malonate-semialdehyde dehydrogenase (488 aa).

Residues A150, F152, K176, E179, R180, S229, and T251 each contribute to the NAD(+) site. C284 functions as the Nucleophile in the catalytic mechanism. Residue E382 participates in NAD(+) binding.

It belongs to the aldehyde dehydrogenase family. IolA subfamily. As to quaternary structure, homotetramer.

The enzyme catalyses 3-oxopropanoate + NAD(+) + CoA + H2O = hydrogencarbonate + acetyl-CoA + NADH + H(+). It catalyses the reaction 2-methyl-3-oxopropanoate + NAD(+) + CoA + H2O = propanoyl-CoA + hydrogencarbonate + NADH + H(+). Its pathway is polyol metabolism; myo-inositol degradation into acetyl-CoA; acetyl-CoA from myo-inositol: step 7/7. Functionally, catalyzes the oxidation of malonate semialdehyde (MSA) and methylmalonate semialdehyde (MMSA) into acetyl-CoA and propanoyl-CoA, respectively. Is involved in a myo-inositol catabolic pathway. Bicarbonate, and not CO2, is the end-product of the enzymatic reaction. The sequence is that of Malonate-semialdehyde dehydrogenase from Listeria innocua serovar 6a (strain ATCC BAA-680 / CLIP 11262).